Consider the following 561-residue polypeptide: 2-succinyl-5-enolpyruvyl-6-hydroxy-3-cyclohexene-1-carboxylate synthase (561 aa).

It belongs to the TPP enzyme family. MenD subfamily. Homodimer. Mg(2+) serves as cofactor. Requires Mn(2+) as cofactor. It depends on thiamine diphosphate as a cofactor.

It carries out the reaction isochorismate + 2-oxoglutarate + H(+) = 5-enolpyruvoyl-6-hydroxy-2-succinyl-cyclohex-3-ene-1-carboxylate + CO2. The protein operates within quinol/quinone metabolism; 1,4-dihydroxy-2-naphthoate biosynthesis; 1,4-dihydroxy-2-naphthoate from chorismate: step 2/7. It functions in the pathway quinol/quinone metabolism; menaquinone biosynthesis. Catalyzes the thiamine diphosphate-dependent decarboxylation of 2-oxoglutarate and the subsequent addition of the resulting succinic semialdehyde-thiamine pyrophosphate anion to isochorismate to yield 2-succinyl-5-enolpyruvyl-6-hydroxy-3-cyclohexene-1-carboxylate (SEPHCHC). This Proteus mirabilis (strain HI4320) protein is 2-succinyl-5-enolpyruvyl-6-hydroxy-3-cyclohexene-1-carboxylate synthase.